The sequence spans 527 residues: tRNA pseudouridine synthase Pus10 (527 aa).

Positions 21 and 24 each coordinate Zn(2+). Residues 42-87 (KELLNELQKFLEPEKPELILEAPNPPLKKIRLHEDGIDNLSEDGKE) adopt a coiled-coil conformation. Phosphoserine is present on Ser-82. The Zn(2+) site is built by Cys-107 and Cys-110. The tract at residues 302-315 (TPWIIDGERKMESS) is RNA binding forefinger loop. Asp-342 functions as the Nucleophile in the catalytic mechanism. Residues 440-455 (QKTPLRVLHRRPLAVR) form an RNA binding thumb loop region.

It belongs to the pseudouridine synthase Pus10 family. As to quaternary structure, interacts with components of the microprocessor complex DROSHA and DGCR8. Proteolytically cleaved during TRAIL-induced cell death. Cleaved, in vitro, either by caspase-3 (CASP3) or caspase-8 (CASP8).

The protein localises to the nucleus. It localises to the cytoplasm. Its subcellular location is the mitochondrion. It carries out the reaction uridine(55) in tRNA = pseudouridine(55) in tRNA. The catalysed reaction is uridine(54) in tRNA = pseudouridine(54) in tRNA. Protein with different functions depending on its subcellular location: involved in miRNA processing in the nucleus and acts as a tRNA pseudouridylate synthase in the cytoplasm. In the cytoplasm, acts as a pseudouridylate synthase by catalyzing synthesis of pseudouridine(54) and pseudouridine(55) from uracil-54 and uracil-55, respectively, in the psi GC loop of a subset of tRNAs. tRNA pseudouridylate synthase activity is enhanced by the presence of 1-methyladenosine at position 53-61 of tRNAs. Does not show tRNA pseudouridylate synthase activity in the nucleus. In the nucleus, promotes primary microRNAs (pri-miRNAs) processing independently of its RNA pseudouridylate synthase activity. Binds pri-miRNAs. Modulator of TRAIL/TNFSF10-induced cell death via activation of procaspase-8 and BID cleavage. Required for the progression of the apoptotic signal through intrinsic mitochondrial cell death. This is tRNA pseudouridine synthase Pus10 from Mus musculus (Mouse).